Here is a 330-residue protein sequence, read N- to C-terminus: Phospholipase C (330 aa).

The signal sequence occupies residues 1-34; the sequence is MVKKTKSNSLKKVATLALANLLLVGALTDNSAKA. A disulfide bridge links Cys155 with Cys191.

It belongs to the neutral sphingomyelinase family. Monomer.

The protein localises to the secreted. It carries out the reaction a 1,2-diacyl-sn-glycero-3-phosphocholine + H2O = phosphocholine + a 1,2-diacyl-sn-glycerol + H(+). Bacterial hemolysins are exotoxins that attack blood cell membranes and cause cell rupture. Beta-hemolysin is a phospholipase C with specific activity toward sphingomyelins. Has a high specificity for sphingomyelin, hydrolyzes lysophosphatidylcholine at a much lower rate, but has no activity towards phosphatidylcholine, phosphatidylethanolamine, or phosphatidylserine. The polypeptide is Phospholipase C (hlb) (Staphylococcus aureus (strain NCTC 8325 / PS 47)).